A 333-amino-acid polypeptide reads, in one-letter code: uncharacterized protein (333 aa).

Residues 67 to 274 enclose the Radical SAM core domain; the sequence is HFYPTTQVVS…LEMARNLAIE (208 aa). [4Fe-4S] cluster contacts are provided by cysteine 82, cysteine 86, and cysteine 89.

The cofactor is [4Fe-4S] cluster.

This is an uncharacterized protein from Methanocaldococcus jannaschii (strain ATCC 43067 / DSM 2661 / JAL-1 / JCM 10045 / NBRC 100440) (Methanococcus jannaschii).